Reading from the N-terminus, the 555-residue chain is Formate--tetrahydrofolate ligase (555 aa).

Residue 65–72 (TPAGEGKT) coordinates ATP.

This sequence belongs to the formate--tetrahydrofolate ligase family.

The catalysed reaction is (6S)-5,6,7,8-tetrahydrofolate + formate + ATP = (6R)-10-formyltetrahydrofolate + ADP + phosphate. Its pathway is one-carbon metabolism; tetrahydrofolate interconversion. The chain is Formate--tetrahydrofolate ligase from Paracoccus denitrificans (strain Pd 1222).